Reading from the N-terminus, the 967-residue chain is RNA polymerase II C-terminal domain phosphatase-like 1 (967 aa).

The Nuclear localization signal (NLS) motif lies at 38–41; it reads RKKK. The 251-residue stretch at 151–401 folds into the FCP1 homology domain; sequence LNLRCLGIVF…TPVLCVARNV (251 aa). Disordered stretches follow at residues 548–611 and 643–712; these read SEPS…VQSR and MEKH…RNSD. The span at 590–603 shows a compositional bias: pro residues; it reads PSEPSFPQRPPVQA. A compositionally biased stretch (basic and acidic residues) spans 665–684; that stretch reads RMLHENRRPPKESLRRDEQL. 2 consecutive DRBM domains span residues 724 to 792 and 855 to 925; these read TETS…NLAD and GSIT…SVRS. Residues 928-967 form a disordered region; the sequence is GQPLHKRQGSPRSFGGMSNKRLKPDFQRSLQRMPSSGRYS. The segment at 945–967 is required for nuclear localization (NLS); the sequence is SNKRLKPDFQRSLQRMPSSGRYS. Residues 947-951 carry the Nuclear localization signal (NLS) motif; it reads KRLKP. Over residues 955–967 the composition is skewed to polar residues; that stretch reads RSLQRMPSSGRYS.

As to quaternary structure, interacts with FREE1, ANAC019, MYB3, MYB4 and MYB32. Binds to DMS3. Interacts with RCF3. Interacts with RS40 and RS41. Interacts with EIF4A3. Interacts with UPF3. Mg(2+) is required as a cofactor. It depends on Co(2+) as a cofactor. Requires Mn(2+) as cofactor. As to expression, expressed at very low levels in roots, leaves, stems, flowers and siliques.

The protein localises to the nucleus. The protein resides in the nucleus speckle. The catalysed reaction is O-phospho-L-seryl-[protein] + H2O = L-seryl-[protein] + phosphate. It catalyses the reaction O-phospho-L-threonyl-[protein] + H2O = L-threonyl-[protein] + phosphate. Functionally, processively dephosphorylates 'Ser-5' but not 'Ser-2' of the heptad repeats YSPTSPS in the C-terminal domain of the largest RNA polymerase II subunit (RPB1). This promotes the activity of RNA polymerase II. Together with CPL2, required for male gametes fertility. Multifunctional regulator that modulates plant growth, stress, and phytohormones responses. Negative regulator of stress gene transcription involved in abscisic acid (ABA) mediated and jasmonic acid (JA) mediated signaling pathways, NaCl, osmotic stress, wounding, and cold resistance. Negatively regulates the expression of jasmonic acid (JA) biosynthetic genes in response to wounding. Forms a complex with RCF3 that modulates co-transcriptional processes such as mRNA capping and polyadenylation, and functions to repress stress-inducible gene expression. Dephosphorylates RCF3. Involved in the dephosphorylation of EIF4A3. This dephosphorylation retains EIF4A3 in the nucleus and limits its accumulation in the cytoplasm. Is essential for the degradation of the nonsense-mediated mRNA decay (NMD) transcripts. This Arabidopsis thaliana (Mouse-ear cress) protein is RNA polymerase II C-terminal domain phosphatase-like 1.